The primary structure comprises 378 residues: Chaperone protein DnaJ 2 (378 aa).

The J domain maps to 4–68 (DYYAVLGVRR…QKKQVYDLGG (65 aa)). Residues 130 to 212 (GTTKDIQVET…CAGDGRVRSR (83 aa)) form a CR-type zinc finger. Residues cysteine 143, cysteine 146, cysteine 160, cysteine 163, cysteine 186, cysteine 189, cysteine 200, and cysteine 203 each coordinate Zn(2+). CXXCXGXG motif repeat units lie at residues 143–150 (CTTCSGEG), 160–167 (CDMCRGRG), 186–193 (CPQCQGFG), and 200–207 (CPECAGDG). Positions 351–378 (RGEERPTGQFQPGQQGLFSRLKDAFNGR) are disordered. Residues 358-367 (GQFQPGQQGL) are compositionally biased toward polar residues.

It belongs to the DnaJ family. Homodimer. Zn(2+) is required as a cofactor.

Its subcellular location is the cytoplasm. In terms of biological role, participates actively in the response to hyperosmotic and heat shock by preventing the aggregation of stress-denatured proteins and by disaggregating proteins, also in an autonomous, DnaK-independent fashion. Unfolded proteins bind initially to DnaJ; upon interaction with the DnaJ-bound protein, DnaK hydrolyzes its bound ATP, resulting in the formation of a stable complex. GrpE releases ADP from DnaK; ATP binding to DnaK triggers the release of the substrate protein, thus completing the reaction cycle. Several rounds of ATP-dependent interactions between DnaJ, DnaK and GrpE are required for fully efficient folding. Also involved, together with DnaK and GrpE, in the DNA replication of plasmids through activation of initiation proteins. The sequence is that of Chaperone protein DnaJ 2 from Streptomyces avermitilis (strain ATCC 31267 / DSM 46492 / JCM 5070 / NBRC 14893 / NCIMB 12804 / NRRL 8165 / MA-4680).